The sequence spans 376 residues: Growth/differentiation factor 8 (376 aa).

The first 22 residues, methionine 1 to serine 22, serve as a signal peptide directing secretion. Positions aspartate 23–arginine 267 are excised as a propeptide. Intrachain disulfides connect cysteine 273/cysteine 283, cysteine 282/cysteine 341, cysteine 310/cysteine 373, and cysteine 314/cysteine 375.

It belongs to the TGF-beta family. In terms of assembly, homodimer; disulfide-linked. In terms of tissue distribution, highly expressed in muscle. Also expressed in other tissues such as eye, gill, ovary, gut and brain. Very low level detected in testis. Not expressed in liver, kidney, stomach or heart.

It is found in the secreted. In terms of biological role, acts specifically as a negative regulator of skeletal muscle growth. This is Growth/differentiation factor 8 from Oreochromis mossambicus (Mozambique tilapia).